Consider the following 1310-residue polypeptide: Major viral transcription factor ICP4 homolog (1310 aa).

3 disordered regions span residues A117–E271, G285–I454, and G636–K697. Over residues P341–E350 the composition is skewed to basic and acidic residues. Composition is skewed to low complexity over residues F351–S364, P392–S407, and P648–A666. The Nuclear localization signal signature appears at R677–K685. Phosphoserine; by viral VZV ORF66 occurs at positions 686 and 722. Disordered stretches follow at residues G1193–V1258 and E1282–G1310. Residues R1217 to E1227 show a composition bias toward basic and acidic residues. Acidic residues predominate over residues L1228 to D1250.

Belongs to the herpesviridae ICP4 family. In terms of assembly, interacts with IE4 and IE63. Interacts with host USF1 and SP1. In terms of processing, phosphorylated by ORF66 protein kinase on Ser-686 and Ser-722. Also phosphorylated by ORF47 protein kinase and by human CSNK2A1/CKII.

It is found in the host nucleus. It localises to the host cytoplasm. The protein localises to the virion tegument. Transcriptional transactivator. May interact with and recruit specific components of the general transcription machinery to viral promoters and stabilize their formation for transcription initiation. Negatively regulates its own transcription. This immediate early (EI) protein may be necessary in virion for viral pathogenesis. The chain is Major viral transcription factor ICP4 homolog from Homo sapiens (Human).